The sequence spans 346 residues: Selenocysteine Se-methyltransferase (346 aa).

Residues 13 to 330 (SMKELLKETG…TTIRAIHKRL (318 aa)) form the Hcy-binding domain. Residues Cys248, Cys315, and Cys316 each contribute to the Zn(2+) site.

Zn(2+) is required as a cofactor. In terms of tissue distribution, expressed in roots, young leaves and florets, but not detected in plants not exposed to selenium.

The catalysed reaction is S-methyl-L-methionine + L-selenocysteine = Se-methyl-L-selenocysteine + L-methionine + H(+). Its activity is regulated as follows. Inhibited by L-methionine. In terms of biological role, catalyzes the methylation of DL- and L-selenocysteine with S-methylmethionine as donor. Also methylates DL-homocysteine, DL- and L-cysteine in vitro. May be involved in selenium detoxification. The chain is Selenocysteine Se-methyltransferase (SMT) from Brassica oleracea var. italica (Broccoli).